Here is a 393-residue protein sequence, read N- to C-terminus: Formate-dependent phosphoribosylglycinamide formyltransferase (393 aa).

N(1)-(5-phospho-beta-D-ribosyl)glycinamide contacts are provided by residues 22 to 23 (EL) and Glu82. ATP contacts are provided by residues Arg114, Lys155, 160-165 (SSGKGQ), 195-198 (EGFI), and Glu203. Positions 119–308 (RLAAEELGLP…EFALHARAIL (190 aa)) constitute an ATP-grasp domain. Mg(2+) contacts are provided by Glu267 and Glu279. N(1)-(5-phospho-beta-D-ribosyl)glycinamide contacts are provided by residues Asp286, Lys356, and 363–364 (RR).

The protein belongs to the PurK/PurT family. In terms of assembly, homodimer.

It catalyses the reaction N(1)-(5-phospho-beta-D-ribosyl)glycinamide + formate + ATP = N(2)-formyl-N(1)-(5-phospho-beta-D-ribosyl)glycinamide + ADP + phosphate + H(+). It participates in purine metabolism; IMP biosynthesis via de novo pathway; N(2)-formyl-N(1)-(5-phospho-D-ribosyl)glycinamide from N(1)-(5-phospho-D-ribosyl)glycinamide (formate route): step 1/1. In terms of biological role, involved in the de novo purine biosynthesis. Catalyzes the transfer of formate to 5-phospho-ribosyl-glycinamide (GAR), producing 5-phospho-ribosyl-N-formylglycinamide (FGAR). Formate is provided by PurU via hydrolysis of 10-formyl-tetrahydrofolate. This chain is Formate-dependent phosphoribosylglycinamide formyltransferase, found in Pseudomonas aeruginosa (strain LESB58).